The sequence spans 315 residues: Iron(3+)-hydroxamate-binding protein FhuD (315 aa).

Residues 1–23 (MTHIYKKLGAAFFALLLIAALAA) form the signal peptide. The N-palmitoyl cysteine moiety is linked to residue Cys-24. Residue Cys-24 is the site of S-diacylglycerol cysteine attachment. The Fe/B12 periplasmic-binding domain maps to 60–315 (RVVVMADGYY…LEFITESLTK (256 aa)).

This sequence belongs to the bacterial solute-binding protein 8 family. The complex is composed of an ATP-binding protein (FhuC), two transmembrane proteins (FhuB and FhuG) and a solute-binding protein (FhuD or YxeB).

It is found in the cell membrane. Its subcellular location is the membrane raft. Part of the ABC transporter complex FhuCBGD involved in iron(3+)-hydroxamate import. Binds the iron(3+)-hydroxamate complex and transfers it to the membrane-bound permease. Required for the transport of ferrichrome and coprogen. This is Iron(3+)-hydroxamate-binding protein FhuD (fhuD) from Bacillus subtilis (strain 168).